Reading from the N-terminus, the 592-residue chain is Malic enzyme, hydrogenosomal (592 aa).

The N-terminal 27 residues, 1–27 (MLAPIQTIARPVSSILPATGALAAKRT), are a transit peptide targeting the hydrogenosome. Tyr-134 (proton donor) is an active-site residue. 182 to 205 (VTDGSRILGLGDLGAGGMQIPIGK) contributes to the NADP(+) binding site. Arg-187 is an NAD(+) binding site. The active-site Proton acceptor is Lys-205. Positions 276, 277, and 300 each coordinate a divalent metal cation. Asp-300 contacts NAD(+). Residue 335-352 (GAGSSGVGVCETIVDCIV) coordinates NADP(+). Asn-443 is an NAD(+) binding site.

This sequence belongs to the malic enzymes family. Mg(2+) is required as a cofactor. It depends on Mn(2+) as a cofactor.

It localises to the hydrogenosome. The catalysed reaction is (S)-malate + NADP(+) = pyruvate + CO2 + NADPH. It carries out the reaction oxaloacetate + H(+) = pyruvate + CO2. This chain is Malic enzyme, hydrogenosomal, found in Neocallimastix frontalis (Rumen fungus).